A 325-amino-acid chain; its full sequence is Ribosomal RNA small subunit methyltransferase H (325 aa).

S-adenosyl-L-methionine is bound by residues 33–35, D52, L87, D101, and Q108; that span reads GGH. A disordered region spans residues 285–325; that stretch reads AEPAGEVEKADNPRAASVRLRAAERTAPNPDRTQPTIGGAS. Over residues 315–325 the composition is skewed to polar residues; sequence DRTQPTIGGAS.

The protein belongs to the methyltransferase superfamily. RsmH family.

It localises to the cytoplasm. It carries out the reaction cytidine(1402) in 16S rRNA + S-adenosyl-L-methionine = N(4)-methylcytidine(1402) in 16S rRNA + S-adenosyl-L-homocysteine + H(+). Its function is as follows. Specifically methylates the N4 position of cytidine in position 1402 (C1402) of 16S rRNA. The protein is Ribosomal RNA small subunit methyltransferase H of Frankia alni (strain DSM 45986 / CECT 9034 / ACN14a).